A 208-amino-acid chain; its full sequence is Uracil phosphoribosyltransferase (208 aa).

Residues arginine 78, arginine 103, and 130–138 (DPMLATGGS) contribute to the 5-phospho-alpha-D-ribose 1-diphosphate site. Residues isoleucine 193 and 198-200 (GDA) each bind uracil. Aspartate 199 serves as a coordination point for 5-phospho-alpha-D-ribose 1-diphosphate.

It belongs to the UPRTase family. Mg(2+) serves as cofactor.

It carries out the reaction UMP + diphosphate = 5-phospho-alpha-D-ribose 1-diphosphate + uracil. It functions in the pathway pyrimidine metabolism; UMP biosynthesis via salvage pathway; UMP from uracil: step 1/1. With respect to regulation, allosterically activated by GTP. Its function is as follows. Catalyzes the conversion of uracil and 5-phospho-alpha-D-ribose 1-diphosphate (PRPP) to UMP and diphosphate. In Haemophilus influenzae (strain 86-028NP), this protein is Uracil phosphoribosyltransferase.